The chain runs to 179 residues: Cell division protein ZapC (179 aa).

It belongs to the ZapC family. Interacts directly with FtsZ.

Its subcellular location is the cytoplasm. In terms of biological role, contributes to the efficiency of the cell division process by stabilizing the polymeric form of the cell division protein FtsZ. Acts by promoting interactions between FtsZ protofilaments and suppressing the GTPase activity of FtsZ. The chain is Cell division protein ZapC from Ferrimonas balearica (strain DSM 9799 / CCM 4581 / KCTC 23876 / PAT).